Here is a 177-residue protein sequence, read N- to C-terminus: MEDQVILVDENDTEIGVEGKMIAHRSGSLHRAISIFIFDSADRLLLQKRAASKYHSAGLWSNTCCSHPRPREECARAARRRLREEMGIACELDVKFGFVYRAVLTNHLIENEFDHVFFGRHDGDPVPNPDEAEDWKWVDLAWLRADLNERPHAYSFWLEACIDRVIACREEDRTRVA.

Histidine 24 and histidine 30 together coordinate Mn(2+). The Nudix hydrolase domain maps to 28 to 160 (SLHRAISIFI…PHAYSFWLEA (133 aa)). The active site involves cysteine 65. Cysteine 65 lines the Mg(2+) pocket. Histidine 67 provides a ligand contact to Mn(2+). Residue glutamate 85 coordinates Mg(2+). Glutamate 110 and glutamate 112 together coordinate Mn(2+). Glutamate 112 is an active-site residue.

This sequence belongs to the IPP isomerase type 1 family. It depends on Mg(2+) as a cofactor. Mn(2+) is required as a cofactor.

Its subcellular location is the cytoplasm. It carries out the reaction isopentenyl diphosphate = dimethylallyl diphosphate. It functions in the pathway isoprenoid biosynthesis; dimethylallyl diphosphate biosynthesis; dimethylallyl diphosphate from isopentenyl diphosphate: step 1/1. Its function is as follows. Catalyzes the 1,3-allylic rearrangement of the homoallylic substrate isopentenyl (IPP) to its highly electrophilic allylic isomer, dimethylallyl diphosphate (DMAPP). The chain is Isopentenyl-diphosphate Delta-isomerase 1 from Aromatoleum aromaticum (strain DSM 19018 / LMG 30748 / EbN1) (Azoarcus sp. (strain EbN1)).